Here is a 499-residue protein sequence, read N- to C-terminus: uncharacterized protein (499 aa).

The next 11 membrane-spanning stretches (helical) occupy residues Phe5–Val25, Leu79–Leu99, Ala110–Ala130, Pro132–Thr152, Val170–Leu190, Tyr203–Val223, Ala252–Trp272, Val286–Ile306, Leu332–Phe352, Phe354–Tyr374, and Leu377–Val397.

Belongs to the glycosyltransferase 39 family.

The protein localises to the cell membrane. This is an uncharacterized protein from Aquifex aeolicus (strain VF5).